The primary structure comprises 270 residues: 4-hydroxy-tetrahydrodipicolinate reductase (270 aa).

NAD(+) contacts are provided by residues 9–14 (GAGGRM) and Glu-35. Arg-36 contributes to the NADP(+) binding site. NAD(+)-binding positions include 99 to 101 (GTT) and 123 to 126 (ASNF). His-156 functions as the Proton donor/acceptor in the catalytic mechanism. Residue His-157 participates in (S)-2,3,4,5-tetrahydrodipicolinate binding. Residue Lys-160 is the Proton donor of the active site. (S)-2,3,4,5-tetrahydrodipicolinate is bound at residue 166 to 167 (GT).

Belongs to the DapB family.

It is found in the cytoplasm. The catalysed reaction is (S)-2,3,4,5-tetrahydrodipicolinate + NAD(+) + H2O = (2S,4S)-4-hydroxy-2,3,4,5-tetrahydrodipicolinate + NADH + H(+). It catalyses the reaction (S)-2,3,4,5-tetrahydrodipicolinate + NADP(+) + H2O = (2S,4S)-4-hydroxy-2,3,4,5-tetrahydrodipicolinate + NADPH + H(+). Its pathway is amino-acid biosynthesis; L-lysine biosynthesis via DAP pathway; (S)-tetrahydrodipicolinate from L-aspartate: step 4/4. Catalyzes the conversion of 4-hydroxy-tetrahydrodipicolinate (HTPA) to tetrahydrodipicolinate. In Haemophilus influenzae (strain ATCC 51907 / DSM 11121 / KW20 / Rd), this protein is 4-hydroxy-tetrahydrodipicolinate reductase.